The sequence spans 153 residues: Small ribosomal subunit protein bS16 (153 aa).

A disordered region spans residues 114 to 153 (ENEPVGEAITPKKKKAKAEDAEAAADAPAEAAAESEAADK). Residues 137 to 153 (AADAPAEAAAESEAADK) show a composition bias toward low complexity.

It belongs to the bacterial ribosomal protein bS16 family.

This chain is Small ribosomal subunit protein bS16, found in Rhodococcus jostii (strain RHA1).